The sequence spans 122 residues: MIQKETNLVVADNSGAKKVRCIHVFGGTGRRYASLGDQVIVSVKAAVPGGVVKKKEVCKAVVVRCAKELRRKDGSYIRFDENAVVLLNAQGEPRGTRIFGPVARELRDRKYMKIVSLAPEVL.

This sequence belongs to the universal ribosomal protein uL14 family. In terms of assembly, part of the 50S ribosomal subunit. Forms a cluster with proteins L3 and L19. In the 70S ribosome, L14 and L19 interact and together make contacts with the 16S rRNA in bridges B5 and B8.

Its function is as follows. Binds to 23S rRNA. Forms part of two intersubunit bridges in the 70S ribosome. The sequence is that of Large ribosomal subunit protein uL14 from Chlorobium phaeovibrioides (strain DSM 265 / 1930) (Prosthecochloris vibrioformis (strain DSM 265)).